The following is a 525-amino-acid chain: uncharacterized protein (525 aa).

A run of 6 helical transmembrane segments spans residues 7–29 (FLAT…LGQI), 34–51 (LRFG…VGAL), 64–82 (GLGV…GSTF), 92–114 (LMLA…GRLF), 121–143 (VAGL…ATHG), and 148–170 (LVGY…AIIA). 2 consecutive RCK C-terminal domains span residues 178-257 (KDNT…LGHV) and 259-341 (ERTL…LFGD). Transmembrane regions (helical) follow at residues 351 to 370 (ALSL…LMVA), 374 to 396 (GLQF…GSIH), 416 to 438 (LGLM…SQAV), 443 to 465 (LAVI…AAAW), and 502 to 524 (SAYG…VIVL).

Belongs to the AAE transporter (TC 2.A.81) family.

It is found in the cell membrane. This is an uncharacterized protein from Cutibacterium acnes (strain DSM 16379 / KPA171202) (Propionibacterium acnes).